A 203-amino-acid polypeptide reads, in one-letter code: Probable cytochrome c oxidase subunit 3 (203 aa).

A run of 5 helical transmembrane segments spans residues 30–50 (IVWL…YFTA), 70–90 (AVPV…GVFA), 102–122 (WYVI…YEYY), 142–162 (LATG…IFLL), and 179–199 (IVVS…FTVI).

Belongs to the cytochrome c oxidase subunit 3 family.

Its subcellular location is the cell membrane. The enzyme catalyses 4 Fe(II)-[cytochrome c] + O2 + 8 H(+)(in) = 4 Fe(III)-[cytochrome c] + 2 H2O + 4 H(+)(out). The polypeptide is Probable cytochrome c oxidase subunit 3 (ctaE) (Mycolicibacterium paratuberculosis (strain ATCC BAA-968 / K-10) (Mycobacterium paratuberculosis)).